Reading from the N-terminus, the 203-residue chain is Endo-type membrane-bound lytic murein transglycosylase A (203 aa).

A signal peptide spans 1-15 (MKLRWLLILVVFLAG). A lipid anchor (N-palmitoyl cysteine) is attached at C16. A lipid anchor (S-diacylglycerol cysteine) is attached at C16.

The protein belongs to the transglycosylase Slt family.

It is found in the cell outer membrane. The catalysed reaction is Endolytic cleavage of the (1-&gt;4)-beta-glycosidic linkage between N-acetylmuramic acid (MurNAc) and N-acetylglucosamine (GlcNAc) residues in peptidoglycan with concomitant formation of a 1,6-anhydrobond in the MurNAc residue.. In terms of biological role, murein-degrading enzyme. May play a role in recycling of muropeptides during cell elongation and/or cell division. Preferentially cleaves at a distance of more than two disaccharide units from the ends of the glycan chain. The protein is Endo-type membrane-bound lytic murein transglycosylase A of Klebsiella pneumoniae subsp. pneumoniae (strain ATCC 700721 / MGH 78578).